A 250-amino-acid chain; its full sequence is Phosphoribosylaminoimidazole-succinocarboxamide synthase (250 aa).

Belongs to the SAICAR synthetase family.

It catalyses the reaction 5-amino-1-(5-phospho-D-ribosyl)imidazole-4-carboxylate + L-aspartate + ATP = (2S)-2-[5-amino-1-(5-phospho-beta-D-ribosyl)imidazole-4-carboxamido]succinate + ADP + phosphate + 2 H(+). It participates in purine metabolism; IMP biosynthesis via de novo pathway; 5-amino-1-(5-phospho-D-ribosyl)imidazole-4-carboxamide from 5-amino-1-(5-phospho-D-ribosyl)imidazole-4-carboxylate: step 1/2. In Bifidobacterium longum (strain DJO10A), this protein is Phosphoribosylaminoimidazole-succinocarboxamide synthase.